Here is a 775-residue protein sequence, read N- to C-terminus: Metal transporter CNNM4 (775 aa).

Topologically, residues 1–178 are extracellular; sequence MAPVGGGGRP…LLFMVEEPGR (178 aa). Asn-85 and Asn-122 each carry an N-linked (GlcNAc...) asparagine glycan. Residues 178–358 form the CNNM transmembrane domain; it reads RFLPLWLHIL…EPYNDLVKEE (181 aa). Residues 179–199 traverse the membrane as a helical segment; the sequence is FLPLWLHILLITVLLVLSGIF. Residues 200-240 are Cytoplasmic-facing; it reads SGLNLGLMALDPMELRIVQNCGTEKERRYARKIEPIRRKGN. The helical intramembrane region spans 241–261; that stretch reads YLLCSLLLGNVLVNTSLTILL. The Cytoplasmic segment spans residues 262 to 264; the sequence is DNL. The helical transmembrane segment at 265 to 285 threads the bilayer; that stretch reads IGSGLMAVASSTIGIVIFGEI. Topologically, residues 286 to 293 are extracellular; the sequence is LPQALCSR. A helical membrane pass occupies residues 294–316; the sequence is HGLAVGANTILLTKFFMLLTFPL. At 317–775 the chain is on the cytoplasmic side; sequence SFPISKLLDF…LHKASHENAI (459 aa). CBS domains follow at residues 377–438 and 445–511; these read MTQL…CTPL and YNHP…ILDE. Residues Ser-660, Ser-664, and Ser-770 each carry the phosphoserine modification.

This sequence belongs to the ACDP family. In terms of assembly, interacts with COX11. As to expression, widely expressed. Highly expressed in heart.

The protein localises to the cell membrane. In terms of biological role, probable metal transporter. The interaction with the metal ion chaperone COX11 suggests that it may play a role in sensory neuron functions. May play a role in biomineralization and retinal function. This Homo sapiens (Human) protein is Metal transporter CNNM4 (CNNM4).